Reading from the N-terminus, the 117-residue chain is Fluoride-specific ion channel FluC 2 (117 aa).

4 helical membrane passes run 4–24 (FLIG…GDII), 31–51 (KFPW…GIIT), 59–79 (LSMI…TFMY), and 94–114 (LIYI…GEFI). Na(+)-binding residues include Gly69 and Thr72.

Belongs to the fluoride channel Fluc/FEX (TC 1.A.43) family.

It is found in the cell membrane. The enzyme catalyses fluoride(in) = fluoride(out). Na(+) is not transported, but it plays an essential structural role and its presence is essential for fluoride channel function. Fluoride-specific ion channel. Important for reducing fluoride concentration in the cell, thus reducing its toxicity. This chain is Fluoride-specific ion channel FluC 2, found in Clostridium acetobutylicum (strain ATCC 824 / DSM 792 / JCM 1419 / IAM 19013 / LMG 5710 / NBRC 13948 / NRRL B-527 / VKM B-1787 / 2291 / W).